A 316-amino-acid chain; its full sequence is Cuticle collagen 13 (316 aa).

Residues 1-36 form the signal peptide; sequence MSEDLKQIAQETESLRKVAFFGIAVSTIATLTAIIA. 2 stretches are compositionally biased toward low complexity: residues 127–157 and 183–204; these read SGAA…PGQD and APGQ…GAAL. The segment at 127–316 is disordered; it reads SGAAGPAGSP…CPPPRTAPGY (190 aa). 5 triple-helical region regions span residues 128–157, 176–202, 206–235, 240–266, and 269–304; these read GAAG…PGQD, GPPG…SGGA, GPPG…PGQV, GTPG…AGSS, and GGPG…EGAC. Pro residues predominate over residues 205–217; the sequence is PGPPGPAGPPGPA. Low complexity predominate over residues 219–234; that stretch reads QPGSNGNAGAPGAPGQ. Over residues 241 to 251 the composition is skewed to pro residues; sequence TPGPAGPPGSP. Low complexity-rich tracts occupy residues 256 to 266 and 276 to 295; these read APGQPGQAGSS and DAGA…PGQD. Positions 307–316 are enriched in pro residues; that stretch reads CPPPRTAPGY.

This sequence belongs to the cuticular collagen family. Collagen polypeptide chains are complexed within the cuticle by disulfide bonds and other types of covalent cross-links.

Nematode cuticles are composed largely of collagen-like proteins. The cuticle functions both as an exoskeleton and as a barrier to protect the worm from its environment. In Caenorhabditis elegans, this protein is Cuticle collagen 13 (col-13).